A 609-amino-acid chain; its full sequence is MKSLLFVVFIFLTTTYAAKVSFKVIAPDAKNRVHVNINGVLVELKASDPDVPYYTGFAELKHGQSYNYVVDGNAEPFKRLLNGSSTKNEFFNRPVTYATNIPELPSILTEGSWTRGDTSNPIWDSNYVPSIFVTGNPREMNELIENVKKNTYKTKITFIGPETINTFEGCTLGLHKPGRKHNDAKQSWIWALPEGQFMANRNWFKIRHMEEDPTQLREKLYADILRKMGTYANEANMVRFFINKEGMGIFNMLDDVIMYSYINAMFYHGDTPEQLGGLYDGASGASFNFPGDFDSFIPNVESPLDQDAIEPFSKAFTSIDFLEDEQVKTIGKYFDYDQFLRFMVMEFLTGDWDGYWQEQTNDGAYIDINDHNKIYYLGQDFDATFGVNLEQKREFVNVSYTEYPKLFPGGVLINRLLQNPGVKKTFENYLKITVQEIFNNATLGPYVTARHEFLAPDLQWDRSIKQRSPGNIFGWTFEQTYENLFEGVTAPGKNSGGADWGLLEWVAAKEKAVKSYLSSSEAADAATVTQVPEAPGTDGTPSESTAWPHANTRFRQAEASNTHKIGTSSPSNFIVKIKQGTVSSSSSIKRTPCILPLVILASTLFASFF.

Residues 1–17 form the signal peptide; it reads MKSLLFVVFIFLTTTYA. Asn-82, Asn-397, and Asn-440 each carry an N-linked (GlcNAc...) asparagine glycan. The segment at 527–547 is disordered; that stretch reads TVTQVPEAPGTDGTPSESTAW. Ser-584 carries the GPI-anchor amidated serine lipid modification. The propeptide at 585–609 is removed in mature form; it reads SSSIKRTPCILPLVILASTLFASFF.

The protein localises to the cell membrane. Functionally, may play a role in cell adhesion. In Rhizopus delemar (strain RA 99-880 / ATCC MYA-4621 / FGSC 9543 / NRRL 43880) (Mucormycosis agent), this protein is Spore coat protein homolog 1.